Consider the following 239-residue polypeptide: Large ribosomal subunit protein bL25 (239 aa).

The tract at residues 211 to 239 (KGKKDKEDEEAEKGTSVASPTTATGGTKK) is disordered. Over residues 226 to 239 (SVASPTTATGGTKK) the composition is skewed to polar residues.

Belongs to the bacterial ribosomal protein bL25 family. CTC subfamily. In terms of assembly, part of the 50S ribosomal subunit; part of the 5S rRNA/L5/L18/L25 subcomplex. Contacts the 5S rRNA. Binds to the 5S rRNA independently of L5 and L18.

In terms of biological role, this is one of the proteins that binds to the 5S RNA in the ribosome where it forms part of the central protuberance. This Endomicrobium trichonymphae protein is Large ribosomal subunit protein bL25.